Reading from the N-terminus, the 912-residue chain is Isoleucine--tRNA ligase (912 aa).

The 'HIGH' region motif lies at 57–67; it reads PYANGDIHLGT. Glu-549 serves as a coordination point for L-isoleucyl-5'-AMP. Positions 590–594 match the 'KMSKS' region motif; it reads KMSKS. Lys-593 is a binding site for ATP. The Zn(2+) site is built by Cys-880, Cys-883, Cys-900, and Cys-903.

It belongs to the class-I aminoacyl-tRNA synthetase family. IleS type 1 subfamily. Monomer. The cofactor is Zn(2+).

The protein resides in the cytoplasm. It carries out the reaction tRNA(Ile) + L-isoleucine + ATP = L-isoleucyl-tRNA(Ile) + AMP + diphosphate. In terms of biological role, catalyzes the attachment of isoleucine to tRNA(Ile). As IleRS can inadvertently accommodate and process structurally similar amino acids such as valine, to avoid such errors it has two additional distinct tRNA(Ile)-dependent editing activities. One activity is designated as 'pretransfer' editing and involves the hydrolysis of activated Val-AMP. The other activity is designated 'posttransfer' editing and involves deacylation of mischarged Val-tRNA(Ile). The chain is Isoleucine--tRNA ligase from Fervidobacterium pennivorans (strain DSM 9078 / Ven5).